Reading from the N-terminus, the 143-residue chain is Large ribosomal subunit protein uL13 (143 aa).

It belongs to the universal ribosomal protein uL13 family. As to quaternary structure, part of the 50S ribosomal subunit.

This protein is one of the early assembly proteins of the 50S ribosomal subunit, although it is not seen to bind rRNA by itself. It is important during the early stages of 50S assembly. The protein is Large ribosomal subunit protein uL13 of Variovorax paradoxus (strain S110).